Here is a 265-residue protein sequence, read N- to C-terminus: PBSX phage terminase small subunit (265 aa).

The segment at 241 to 265 (KQKAEKTDDSQEPIEIMIKRKERKS) is disordered.

This sequence to B.subtilis YqaS and B.subtilis phage SPP1 terminase small subunit. As to quaternary structure, dimer of a small and a large subunit.

Functions as a terminase. The sequence is that of PBSX phage terminase small subunit (xtmA) from Bacillus subtilis (strain 168).